Reading from the N-terminus, the 512-residue chain is GMP synthase [glutamine-hydrolyzing] (512 aa).

The Glutamine amidotransferase type-1 domain maps to 7–197 (TIIVLDFGSQ…VFGVCGCSEG (191 aa)). Cys84 acts as the Nucleophile in catalysis. Catalysis depends on residues His171 and Glu173. One can recognise a GMPS ATP-PPase domain in the interval 198-387 (WNMENFIEVE…LGIPDEIVWR (190 aa)). 225-231 (SGGVDSS) serves as a coordination point for ATP.

In terms of assembly, homodimer.

It catalyses the reaction XMP + L-glutamine + ATP + H2O = GMP + L-glutamate + AMP + diphosphate + 2 H(+). The protein operates within purine metabolism; GMP biosynthesis; GMP from XMP (L-Gln route): step 1/1. Functionally, catalyzes the synthesis of GMP from XMP. This is GMP synthase [glutamine-hydrolyzing] from Bacillus cereus (strain G9842).